A 269-amino-acid polypeptide reads, in one-letter code: 3-deoxy-manno-octulosonate cytidylyltransferase (269 aa).

This sequence belongs to the KdsB family.

The protein resides in the cytoplasm. It carries out the reaction 3-deoxy-alpha-D-manno-oct-2-ulosonate + CTP = CMP-3-deoxy-beta-D-manno-octulosonate + diphosphate. It functions in the pathway nucleotide-sugar biosynthesis; CMP-3-deoxy-D-manno-octulosonate biosynthesis; CMP-3-deoxy-D-manno-octulosonate from 3-deoxy-D-manno-octulosonate and CTP: step 1/1. Its pathway is bacterial outer membrane biogenesis; lipopolysaccharide biosynthesis. In terms of biological role, activates KDO (a required 8-carbon sugar) for incorporation into bacterial lipopolysaccharide in Gram-negative bacteria. The sequence is that of 3-deoxy-manno-octulosonate cytidylyltransferase from Cupriavidus taiwanensis (strain DSM 17343 / BCRC 17206 / CCUG 44338 / CIP 107171 / LMG 19424 / R1) (Ralstonia taiwanensis (strain LMG 19424)).